The chain runs to 469 residues: Ubiquitin carboxyl-terminal hydrolase MINDY-1 (469 aa).

The interval 1–105 is disordered; sequence MEHHQPEHPA…RLQELPQSPR (105 aa). The span at 23-44 shows a compositional bias: basic and acidic residues; it reads ENHKVLSEPKEHPQDKDAKEAD. Ser-103 is modified (phosphoserine). The Nucleophile role is filled by Cys-137. His-319 functions as the Proton acceptor in the catalytic mechanism. Positions 388-428 are ubiquitin-binding domain (UBD); it reads QVDQDYLIALSLQQQQPPPQGTSGLSDLELAQQLQQEEYQQ. The interval 401–469 is disordered; it reads QQQPPPQGTS…PKQESDCVLL (69 aa). Residues 415–448 are compositionally biased toward low complexity; the sequence is LELAQQLQQEEYQQHQAAQAAPARAPSPQGRGAA. At Ser-441 the chain carries Phosphoserine. Positions 453-469 are enriched in basic and acidic residues; sequence AAERRQRPKQESDCVLL.

It belongs to the MINDY deubiquitinase family. FAM63 subfamily.

It catalyses the reaction Thiol-dependent hydrolysis of ester, thioester, amide, peptide and isopeptide bonds formed by the C-terminal Gly of ubiquitin (a 76-residue protein attached to proteins as an intracellular targeting signal).. Its function is as follows. Hydrolase that can specifically remove 'Lys-48'-linked conjugated ubiquitin from proteins. Has exodeubiquitinase activity and has a preference for long polyubiquitin chains. May play a regulatory role at the level of protein turnover. This chain is Ubiquitin carboxyl-terminal hydrolase MINDY-1 (MINDY1), found in Bos taurus (Bovine).